The primary structure comprises 920 residues: WD repeat-containing protein 47 (920 aa).

Residues 10–42 (KEVEIIKLILDFLNSKKLHISMLALEKESGVIN) form the LisH domain. In terms of domain architecture, CTLH spans 45–102 (FSDDMLFLRQLILDGQWDEVLQFIQPLECMEKFDKKRFRYIILKQKFLEALCVNNAMS). Thr285 is modified (phosphothreonine). Phosphoserine occurs at positions 289, 292, 297, and 312. Positions 371-380 (YEESPERSDT) are enriched in basic and acidic residues. Residues 371-422 (YEESPERSDTPVEAQQPVSSEAMCQGSGLEKEPANGAQNPVPAKQEKNELRD) form a disordered region. Ser423 is subject to Phosphoserine. A disordered region spans residues 501–594 (LNQQCSGSKN…RSKGEEDDKS (94 aa)). Low complexity predominate over residues 506–523 (SGSKNNGSNNSSVTSFST). Over residues 538–552 (NIHTSTPRNPGSTNH) the composition is skewed to polar residues. Thr543 carries the phosphothreonine modification. WD repeat units follow at residues 605–644 (EDTQ…DASA), 660–699 (HHKG…CNAT), 707–749 (MHDG…GQGL), 754–792 (GHTG…CVRV), 799–838 (GTGS…MVQS), 841–880 (PHSS…TKQL), and 887–919 (EHKD…WTYS).

As to quaternary structure, interacts with MAP1S (via WD repeats). Enriched in the nervous system (at protein level).

The protein resides in the cytoplasm. The protein localises to the cytoskeleton. The sequence is that of WD repeat-containing protein 47 (Wdr47) from Mus musculus (Mouse).